The chain runs to 308 residues: Acetyl-coenzyme A carboxylase carboxyl transferase subunit beta (308 aa).

Residues Leu-46–Ala-308 form the CoA carboxyltransferase N-terminal domain.

The protein belongs to the AccD/PCCB family. In terms of assembly, acetyl-CoA carboxylase is a heterohexamer composed of biotin carboxyl carrier protein (AccB), biotin carboxylase (AccC) and two subunits each of ACCase subunit alpha (AccA) and ACCase subunit beta (AccD).

The protein localises to the cytoplasm. It catalyses the reaction N(6)-carboxybiotinyl-L-lysyl-[protein] + acetyl-CoA = N(6)-biotinyl-L-lysyl-[protein] + malonyl-CoA. It functions in the pathway lipid metabolism; malonyl-CoA biosynthesis; malonyl-CoA from acetyl-CoA: step 1/1. In terms of biological role, component of the acetyl coenzyme A carboxylase (ACC) complex. Biotin carboxylase (BC) catalyzes the carboxylation of biotin on its carrier protein (BCCP) and then the CO(2) group is transferred by the transcarboxylase to acetyl-CoA to form malonyl-CoA. This Caulobacter sp. (strain K31) protein is Acetyl-coenzyme A carboxylase carboxyl transferase subunit beta.